We begin with the raw amino-acid sequence, 343 residues long: Protein RecA (343 aa).

66–73 (GPESSGKT) contributes to the ATP binding site.

The protein belongs to the RecA family.

It is found in the cytoplasm. Its function is as follows. Can catalyze the hydrolysis of ATP in the presence of single-stranded DNA, the ATP-dependent uptake of single-stranded DNA by duplex DNA, and the ATP-dependent hybridization of homologous single-stranded DNAs. It interacts with LexA causing its activation and leading to its autocatalytic cleavage. This is Protein RecA from Rickettsia canadensis (strain McKiel).